The following is a 113-amino-acid chain: uncharacterized protein (113 aa).

The protein localises to the cytoplasm. It localises to the nucleus. This is an uncharacterized protein from Saccharomyces cerevisiae (strain ATCC 204508 / S288c) (Baker's yeast).